A 279-amino-acid chain; its full sequence is DegV domain-containing protein CA_C0701 (279 aa).

The region spanning 4–277 (IKIVTDSTCD…TKACGVFFIE (274 aa)) is the DegV domain. Hexadecanoate contacts are provided by Thr-62 and Ser-94.

Its function is as follows. May bind long-chain fatty acids, such as palmitate, and may play a role in lipid transport or fatty acid metabolism. The protein is DegV domain-containing protein CA_C0701 of Clostridium acetobutylicum (strain ATCC 824 / DSM 792 / JCM 1419 / IAM 19013 / LMG 5710 / NBRC 13948 / NRRL B-527 / VKM B-1787 / 2291 / W).